The following is a 239-amino-acid chain: Probable transcriptional regulatory protein Veis_4238 (239 aa).

The segment at 1–22 (MAGHSKWANIQHRKGRQDEKRG) is disordered.

This sequence belongs to the TACO1 family.

Its subcellular location is the cytoplasm. The sequence is that of Probable transcriptional regulatory protein Veis_4238 from Verminephrobacter eiseniae (strain EF01-2).